We begin with the raw amino-acid sequence, 327 residues long: Phenylalanine--tRNA ligase alpha subunit (327 aa).

Mg(2+) is bound at residue E252.

Belongs to the class-II aminoacyl-tRNA synthetase family. Phe-tRNA synthetase alpha subunit type 1 subfamily. In terms of assembly, tetramer of two alpha and two beta subunits. Mg(2+) is required as a cofactor.

It is found in the cytoplasm. The enzyme catalyses tRNA(Phe) + L-phenylalanine + ATP = L-phenylalanyl-tRNA(Phe) + AMP + diphosphate + H(+). This Shewanella denitrificans (strain OS217 / ATCC BAA-1090 / DSM 15013) protein is Phenylalanine--tRNA ligase alpha subunit.